The chain runs to 181 residues: Histone H1 (181 aa).

Disordered regions lie at residues 1–23 (MTET…THPP) and 81–181 (TKGA…PKKK). The segment covering 8–19 (KPKKVSKPKAKP) has biased composition (basic residues). An H15 domain is found at 20-94 (THPPTSVMVM…GASGSFKLAA (75 aa)). 2 stretches are compositionally biased toward basic residues: residues 103–119 (AVAK…KAAA) and 145–181 (KPKK…PKKK).

This sequence belongs to the histone H1/H5 family.

Its subcellular location is the nucleus. It is found in the chromosome. In terms of biological role, histones H1 are necessary for the condensation of nucleosome chains into higher-order structures. The protein is Histone H1 of Tigriopus californicus (Marine copepod).